The primary structure comprises 397 residues: CCA-adding enzyme (397 aa).

ATP-binding residues include G32 and R35. Residues G32 and R35 each coordinate CTP. Residues D45 and D47 each contribute to the Mg(2+) site. ATP is bound by residues R116, D159, R162, R165, and R168. The CTP site is built by R116, D159, R162, R165, and R168.

The protein belongs to the tRNA nucleotidyltransferase/poly(A) polymerase family. Bacterial CCA-adding enzyme type 3 subfamily. Homodimer. It depends on Mg(2+) as a cofactor.

The enzyme catalyses a tRNA precursor + 2 CTP + ATP = a tRNA with a 3' CCA end + 3 diphosphate. It catalyses the reaction a tRNA with a 3' CCA end + 2 CTP + ATP = a tRNA with a 3' CCACCA end + 3 diphosphate. Catalyzes the addition and repair of the essential 3'-terminal CCA sequence in tRNAs without using a nucleic acid template. Adds these three nucleotides in the order of C, C, and A to the tRNA nucleotide-73, using CTP and ATP as substrates and producing inorganic pyrophosphate. tRNA 3'-terminal CCA addition is required both for tRNA processing and repair. Also involved in tRNA surveillance by mediating tandem CCA addition to generate a CCACCA at the 3' terminus of unstable tRNAs. While stable tRNAs receive only 3'-terminal CCA, unstable tRNAs are marked with CCACCA and rapidly degraded. In Latilactobacillus sakei subsp. sakei (strain 23K) (Lactobacillus sakei subsp. sakei), this protein is CCA-adding enzyme.